The sequence spans 436 residues: Trigger factor (436 aa).

The PPIase FKBP-type domain maps to glycine 163 to proline 248.

This sequence belongs to the FKBP-type PPIase family. Tig subfamily.

It is found in the cytoplasm. The enzyme catalyses [protein]-peptidylproline (omega=180) = [protein]-peptidylproline (omega=0). Involved in protein export. Acts as a chaperone by maintaining the newly synthesized protein in an open conformation. Functions as a peptidyl-prolyl cis-trans isomerase. This is Trigger factor from Staphylococcus saprophyticus subsp. saprophyticus (strain ATCC 15305 / DSM 20229 / NCIMB 8711 / NCTC 7292 / S-41).